We begin with the raw amino-acid sequence, 101 residues long: Urease subunit beta (101 aa).

It belongs to the urease beta subunit family. Heterotrimer of UreA (gamma), UreB (beta) and UreC (alpha) subunits. Three heterotrimers associate to form the active enzyme.

Its subcellular location is the cytoplasm. The catalysed reaction is urea + 2 H2O + H(+) = hydrogencarbonate + 2 NH4(+). The protein operates within nitrogen metabolism; urea degradation; CO(2) and NH(3) from urea (urease route): step 1/1. This chain is Urease subunit beta, found in Allorhizobium ampelinum (strain ATCC BAA-846 / DSM 112012 / S4) (Agrobacterium vitis (strain S4)).